We begin with the raw amino-acid sequence, 175 residues long: Endoribonuclease YbeY (175 aa).

His129, His133, and His139 together coordinate Zn(2+).

It belongs to the endoribonuclease YbeY family. Zn(2+) is required as a cofactor.

The protein resides in the cytoplasm. Functionally, single strand-specific metallo-endoribonuclease involved in late-stage 70S ribosome quality control and in maturation of the 3' terminus of the 16S rRNA. The sequence is that of Endoribonuclease YbeY from Lactobacillus johnsonii (strain CNCM I-12250 / La1 / NCC 533).